The chain runs to 576 residues: MCNTYYKRVKFNLFLYTNSIEMELLAVASIIGYGLFSSQQGRETRPDRNRYAEALGSGQGLDEDYDVKPTDMVRKYRKKAEKRWKKAQVPKESGIITPNMRPSEVMPYFTSGKSMNTNTDYKQRKMELFTGGVLDGHSVSGTYKHKVEAANMFGMTPQGRVTSDGTVGNAPGDTELLKARSVNSHQYNNVLPTEQLRVGPGLGVGPEVAATGGFHQFYRQLPLNINEYKLTQLPGRLVPGGTTTGGKGEIQQIASVNHNPDALVLNYDDRPPEATPNGAILASTQYGKQPRGYAGLRPYEKNYEGIAEADVSALQARYLDQTRGRPRTGDGDTEPIINPNGERDGTGSYVTENMCSMTLESQRGLVNRYITPPGVTGVVQQGGEMRPEFVPETTIREQYEDIYYTGPAGTTVTPTEPMNVVELQPESRHAKRAGQDRAYTPGAGRVNNFAPAAQGAYGLKDHPTYNALQHVVSEPIEQTFLPAAQGDDDRFGTKSNVNNPWGNPASLQIANNQLAANKFNRDVTNTVNLDYDAGQPMKQQNFQPKAWIPNNTDDMKMLPLWKRKQLQAQKNKQQRK.

A hydrophobic region spans residues 13–35; the sequence is LFLYTNSIEMELLAVASIIGYGL. The interval 322 to 348 is disordered; it reads TRGRPRTGDGDTEPIINPNGERDGTGS.

In terms of assembly, interacts with the major capsid protein.

It localises to the virion. In terms of biological role, one of the minor capsid proteins that constitute a network internal to the major capsid proteins and outside the lipid membrane. The minor capsid proteins glue and stabilize the capsomers. Also acts as a molecular tape measure protein that determines the size of the viral capsid. This is Minor capsid protein P2 from Chlorella (PBCV-1).